The primary structure comprises 589 residues: Mitoguardin 2 (589 aa).

The next 2 helical transmembrane spans lie at 11-31 and 42-62; these read IIQA…TTFG and PGLR…ALAA. Residues 87-134 form a disordered region; it reads VPGSVLPVRRSSSAKKGYSRSRVQSPSSKSNDTLSGISSLDPSKHSSS. Composition is skewed to low complexity over residues 106-116 and 123-134; these read RSRVQSPSSKS and ISSLDPSKHSSS.

The protein belongs to the mitoguardin family. Homodimer and heterodimer; forms heterodimers with miga1.

The protein resides in the mitochondrion outer membrane. Regulator of mitochondrial fusion: acts by forming homo- and heterodimers at the mitochondrial outer membrane and facilitating the formation of pld6/MitoPLD dimers. May act by regulating phospholipid metabolism via pld6/MitoPLD. The polypeptide is Mitoguardin 2 (Xenopus laevis (African clawed frog)).